Consider the following 627-residue polypeptide: Sphingomyelin phosphodiesterase (627 aa).

An N-terminal signal peptide occupies residues 1–44; sequence MPHHRASSGQDHLRAGWEQRLERSLPAPRVGLLWMGLGLALVLA. The Saposin B-type domain occupies 83–167; that stretch reads QNLTCPACKV…LLGSSCGHWD (85 aa). Residue asparagine 84 is glycosylated (N-linked (GlcNAc...) asparagine). 3 disulfides stabilise this stretch: cysteine 87/cysteine 163, cysteine 90/cysteine 155, and cysteine 118/cysteine 129. N-linked (GlcNAc...) asparagine glycosylation is present at asparagine 173. Zn(2+)-binding residues include aspartate 204 and histidine 206. 2 cysteine pairs are disulfide-bonded: cysteine 219–cysteine 224 and cysteine 225–cysteine 248. Residues aspartate 276 and asparagine 316 each contribute to the Zn(2+) site. 2 N-linked (GlcNAc...) asparagine glycosylation sites follow: asparagine 333 and asparagine 393. A disulfide bridge connects residues cysteine 383 and cysteine 429. 3 residues coordinate Zn(2+): histidine 423, histidine 455, and histidine 457. Residue serine 506 is modified to Phosphoserine. Asparagine 518 carries N-linked (GlcNAc...) asparagine glycosylation. Intrachain disulfides connect cysteine 582-cysteine 586 and cysteine 592-cysteine 605. Asparagine 611 carries an N-linked (GlcNAc...) asparagine glycan.

The protein belongs to the acid sphingomyelinase family. As to quaternary structure, monomer. Interacts with SORT1; the interaction is required for SMPD1 targeting to lysosomes. It depends on Zn(2+) as a cofactor. Post-translationally, proteolytically processed. Mature lysosomal form arises from C-terminal proteolytic processing of pro-sphingomyelin phosphodiesterase. In terms of processing, both lysosomal and secreted forms are glycosylated but they show a differential pattern of glycosylation. Phosphorylated at Ser-506 by PRKCD upon stress stimuli. Phosphorylation is required for secretion. Post-translationally, this form is generated following cleavage by CASP7 in the extracellular milieu. It shows increased activity.

It is found in the lysosome. The protein localises to the lipid droplet. Its subcellular location is the secreted. The protein resides in the extracellular space. It catalyses the reaction a sphingomyelin + H2O = phosphocholine + an N-acylsphing-4-enine + H(+). It carries out the reaction N-(octadecanoyl)-sphing-4-enine-1-phosphocholine + H2O = N-octadecanoylsphing-4-enine + phosphocholine + H(+). The catalysed reaction is a 1,2-diacyl-sn-glycero-3-phosphocholine + H2O = phosphocholine + a 1,2-diacyl-sn-glycerol + H(+). The enzyme catalyses 1,2-dihexadecanoyl-sn-glycero-3-phosphocholine + H2O = 1,2-dihexadecanoyl-sn-glycerol + phosphocholine + H(+). Its activity is regulated as follows. Hydrolysis of liposomal sphingomyelin is stimulated by incorporation of diacylglycerol (DAG), ceramide and free fatty acids into the liposomal membranes. Phosphatidylcholine hydrolysis is inhibited by incorporation of cholesterol, ceramide, DAG, monoacylglycerol and fatty acids. In terms of biological role, converts sphingomyelin to ceramide. Exists as two enzymatic forms that arise from alternative trafficking of a single protein precursor, one that is targeted to the endolysosomal compartment, whereas the other is released extracellularly. However, in response to various forms of stress, lysosomal exocytosis may represent a major source of the secretory form. Its function is as follows. In the lysosomes, converts sphingomyelin to ceramide. Plays an important role in the export of cholesterol from the intraendolysosomal membranes. Also has phospholipase C activities toward 1,2-diacylglycerolphosphocholine and 1,2-diacylglycerolphosphoglycerol. Modulates stress-induced apoptosis through the production of ceramide. When secreted, modulates cell signaling with its ability to reorganize the plasma membrane by converting sphingomyelin to ceramide. Secreted form is increased in response to stress and inflammatory mediators such as IL1B, IFNG or TNF as well as upon infection with bacteria and viruses. Produces the release of ceramide in the outer leaflet of the plasma membrane playing a central role in host defense. Ceramide reorganizes these rafts into larger signaling platforms that are required to internalize P.aeruginosa, induce apoptosis and regulate the cytokine response in infected cells. In wounded cells, the lysosomal form is released extracellularly in the presence of Ca(2+) and promotes endocytosis and plasma membrane repair. Functionally, this form is generated following cleavage by CASP7 in the extracellular milieu in response to bacterial infection. It shows increased ability to convert sphingomyelin to ceramide and promotes plasma membrane repair. Plasma membrane repair by ceramide counteracts the action of gasdermin-D (GSDMD) perforin (PRF1) pores that are formed in response to bacterial infection. In terms of biological role, (Microbial infection) Secretion is activated by bacteria such as P.aeruginosa, this activation results in the release of ceramide in the outer leaflet of the plasma membrane which facilitates the infection. The polypeptide is Sphingomyelin phosphodiesterase (Mus musculus (Mouse)).